The chain runs to 37 residues: AKVKETTGIVGLXVVPNAREVLINLYRKTLEEIKAVP.

It belongs to the complex I NDUFA5 subunit family. Complex I is composed of about 45 different subunits.

It localises to the mitochondrion inner membrane. Its function is as follows. Accessory subunit of the mitochondrial membrane respiratory chain NADH dehydrogenase (Complex I), that is believed not to be involved in catalysis. Complex I functions in the transfer of electrons from NADH to the respiratory chain. The immediate electron acceptor for the enzyme is believed to be ubiquinone. In Solanum tuberosum (Potato), this protein is NADH dehydrogenase [ubiquinone] 1 alpha subcomplex subunit 5.